The chain runs to 226 residues: UPF0758 protein GWCH70_2550 (226 aa).

Residues 104–226 form the MPN domain; the sequence is VIRSPEDGAK…FVSLKEKGYV (123 aa). Zn(2+)-binding residues include His175, His177, and Asp188. The JAMM motif signature appears at 175-188; that stretch reads HNHPSGDPTPSRED.

This sequence belongs to the UPF0758 family.

The chain is UPF0758 protein GWCH70_2550 from Geobacillus sp. (strain WCH70).